The sequence spans 512 residues: Probable ubiquitin carboxyl-terminal hydrolase 3 (512 aa).

The disordered stretch occupies residues 64–109 (TSKTKESEKSPKSWSAIAKKHVQGDSPVKKSHSVPVPSDRSEKKSF). One can recognise a USP domain in the interval 133-511 (RGFINTGNIC…VAYLLFYTRR (379 aa)). Catalysis depends on C142, which acts as the Nucleophile. H453 functions as the Proton acceptor in the catalytic mechanism.

The protein belongs to the peptidase C19 family.

The enzyme catalyses Thiol-dependent hydrolysis of ester, thioester, amide, peptide and isopeptide bonds formed by the C-terminal Gly of ubiquitin (a 76-residue protein attached to proteins as an intracellular targeting signal).. The sequence is that of Probable ubiquitin carboxyl-terminal hydrolase 3 (ubp3) from Schizosaccharomyces pombe (strain 972 / ATCC 24843) (Fission yeast).